Reading from the N-terminus, the 87-residue chain is Large ribosomal subunit protein bL27 (87 aa).

Residues Met1–Leu21 form a disordered region.

Belongs to the bacterial ribosomal protein bL27 family.

The polypeptide is Large ribosomal subunit protein bL27 (Burkholderia ambifaria (strain MC40-6)).